Consider the following 250-residue polypeptide: 1-(5-phosphoribosyl)-5-[(5-phosphoribosylamino)methylideneamino] imidazole-4-carboxamide isomerase (250 aa).

Asp-12 serves as the catalytic Proton acceptor. The active-site Proton donor is Asp-133.

The protein belongs to the HisA/HisF family.

The protein resides in the cytoplasm. The enzyme catalyses 1-(5-phospho-beta-D-ribosyl)-5-[(5-phospho-beta-D-ribosylamino)methylideneamino]imidazole-4-carboxamide = 5-[(5-phospho-1-deoxy-D-ribulos-1-ylimino)methylamino]-1-(5-phospho-beta-D-ribosyl)imidazole-4-carboxamide. It functions in the pathway amino-acid biosynthesis; L-histidine biosynthesis; L-histidine from 5-phospho-alpha-D-ribose 1-diphosphate: step 4/9. In Zymomonas mobilis subsp. mobilis (strain ATCC 31821 / ZM4 / CP4), this protein is 1-(5-phosphoribosyl)-5-[(5-phosphoribosylamino)methylideneamino] imidazole-4-carboxamide isomerase.